The primary structure comprises 321 residues: Glycerol-3-phosphate dehydrogenase [NAD(P)+] (321 aa).

Residues Ser10, Phe11, Arg31, Arg32, and Lys104 each contribute to the NADPH site. Residues Lys104 and Gly132 each coordinate sn-glycerol 3-phosphate. Ala136 is a binding site for NADPH. Sn-glycerol 3-phosphate contacts are provided by Lys186, Asp238, Ser248, Arg249, and Asn250. The Proton acceptor role is filled by Lys186. Arg249 is a binding site for NADPH. Glu272 contributes to the NADPH binding site.

Belongs to the NAD-dependent glycerol-3-phosphate dehydrogenase family.

The protein resides in the cytoplasm. The enzyme catalyses sn-glycerol 3-phosphate + NAD(+) = dihydroxyacetone phosphate + NADH + H(+). The catalysed reaction is sn-glycerol 3-phosphate + NADP(+) = dihydroxyacetone phosphate + NADPH + H(+). In terms of biological role, catalyzes the reduction of the glycolytic intermediate dihydroxyacetone phosphate (DHAP) to sn-glycerol 3-phosphate (G3P). The protein is Glycerol-3-phosphate dehydrogenase [NAD(P)+] of Methanothermobacter thermautotrophicus (strain ATCC 29096 / DSM 1053 / JCM 10044 / NBRC 100330 / Delta H) (Methanobacterium thermoautotrophicum).